A 261-amino-acid polypeptide reads, in one-letter code: Glutathione S-transferase theta-1 (261 aa).

In terms of domain architecture, GST N-terminal spans 2–101; that stretch reads GLELYLDLLS…YLSRKYNTPD (100 aa). Glutathione contacts are provided by residues 72–73 and 85–86; these read KV and EC. The GST C-terminal domain occupies 107–248; it reads DIKKRAQVDE…LSNIQIDPQL (142 aa).

It belongs to the GST superfamily. Theta family. In terms of assembly, homodimer.

Its subcellular location is the cytoplasm. It catalyses the reaction RX + glutathione = an S-substituted glutathione + a halide anion + H(+). Its function is as follows. Conjugation of reduced glutathione to a wide number of exogenous and endogenous hydrophobic electrophiles. The chain is Glutathione S-transferase theta-1 (GSTT1) from Gallus gallus (Chicken).